A 390-amino-acid chain; its full sequence is Cell division protein FtsZ (390 aa).

GTP is bound by residues 20–24, 106–108, Glu-137, Arg-141, and Asp-184; these read GGGNN and GTG.

This sequence belongs to the FtsZ family. Homodimer. Polymerizes to form a dynamic ring structure in a strictly GTP-dependent manner. Interacts directly with several other division proteins.

Its subcellular location is the cytoplasm. In terms of biological role, essential cell division protein that forms a contractile ring structure (Z ring) at the future cell division site. The regulation of the ring assembly controls the timing and the location of cell division. One of the functions of the FtsZ ring is to recruit other cell division proteins to the septum to produce a new cell wall between the dividing cells. Binds GTP and shows GTPase activity. The polypeptide is Cell division protein FtsZ (Mycoplasmopsis pulmonis (strain UAB CTIP) (Mycoplasma pulmonis)).